We begin with the raw amino-acid sequence, 534 residues long: Coiled-coil domain-containing protein 183 (534 aa).

3 coiled-coil regions span residues 10-54, 136-209, and 323-396; these read EEQT…NIRR, DASK…DMKI, and LAQR…HSNM.

This Homo sapiens (Human) protein is Coiled-coil domain-containing protein 183 (CCDC183).